Reading from the N-terminus, the 473-residue chain is Deoxyribodipyrimidine photo-lyase (473 aa).

One can recognise a Photolyase/cryptochrome alpha/beta domain in the interval 2 to 134; that stretch reads PTHLVWFRRD…ICEGFDDSVI (133 aa). (6R)-5,10-methylene-5,6,7,8-tetrahydrofolate-binding residues include Asn-109 and Glu-110. Tyr-224 contributes to the FAD binding site. Position 228 (Arg-228) interacts with DNA. 236–240 provides a ligand contact to FAD; it reads TSRLS. Interaction with DNA stretches follow at residues 276–283 and 343–344; these read ELIWREFY and NR. 374-376 contributes to the FAD binding site; sequence DGD. Gln-406 serves as a coordination point for DNA.

The protein belongs to the DNA photolyase class-1 family. In terms of assembly, monomer. FAD is required as a cofactor. The cofactor is (6R)-5,10-methylene-5,6,7,8-tetrahydrofolate.

The enzyme catalyses cyclobutadipyrimidine (in DNA) = 2 pyrimidine residues (in DNA).. In terms of biological role, involved in repair of UV radiation-induced DNA damage. Catalyzes the light-dependent monomerization (300-600 nm) of cyclobutyl pyrimidine dimers (in cis-syn configuration), which are formed between adjacent bases on the same DNA strand upon exposure to ultraviolet radiation. The chain is Deoxyribodipyrimidine photo-lyase (phrB) from Salmonella typhimurium (strain LT2 / SGSC1412 / ATCC 700720).